The primary structure comprises 298 residues: HTH-type transcriptional regulator CbbR (298 aa).

An HTH lysR-type domain is found at Arg7 to Thr64. A DNA-binding region (H-T-H motif) is located at residues Phe24–Lys43.

Belongs to the LysR transcriptional regulatory family.

In terms of biological role, transcriptional activator for the cbb operon for RuBisCO and other Calvin cycle genes. This is HTH-type transcriptional regulator CbbR (cbbR) from Rhodospirillum rubrum.